We begin with the raw amino-acid sequence, 30 residues long: L-amino-acid oxidase (30 aa).

It belongs to the flavin monoamine oxidase family. FIG1 subfamily. In terms of assembly, monomer. This is in contrast with most of its orthologs, that are non-covalently linked homodimers. FAD serves as cofactor. Post-translationally, N-glycosylated. As to expression, expressed by the venom gland.

It is found in the secreted. The enzyme catalyses an L-alpha-amino acid + O2 + H2O = a 2-oxocarboxylate + H2O2 + NH4(+). It catalyses the reaction L-leucine + O2 + H2O = 4-methyl-2-oxopentanoate + H2O2 + NH4(+). It carries out the reaction L-phenylalanine + O2 + H2O = 3-phenylpyruvate + H2O2 + NH4(+). The catalysed reaction is L-tryptophan + O2 + H2O = indole-3-pyruvate + H2O2 + NH4(+). The enzyme catalyses L-methionine + O2 + H2O = 4-methylsulfanyl-2-oxobutanoate + H2O2 + NH4(+). It catalyses the reaction L-2-aminohexanoate + O2 + H2O = 2-oxohexanoate + H2O2 + NH4(+). It carries out the reaction L-tyrosine + O2 + H2O = 3-(4-hydroxyphenyl)pyruvate + H2O2 + NH4(+). Functionally, catalyzes an oxidative deamination of predominantly hydrophobic and aromatic L-amino acids, thus producing hydrogen peroxide that may contribute to the diverse toxic effects of this enzyme. Is highly active against L-Met, L-Leu, L-norleucine (L-2-aminohexanoate), L-Trp, L-Phe, moderately active against L-Tyr, and no active on L-Gly, L-Ala, L-Val, L-Pro, L-His, L-Lys, L-Arg, L-Asp, L-Asn, L-Gln, L-Glu, L-Ser, and L-Thr. Exhibits diverse biological activities, such as hemorrhage, hemolysis, edema, antibacterial and antiparasitic activities. In addition, this protein induces apoptosis. It also interacts with endothelial cells, and inhibits collagen- and ADP-induced platelet aggregation. L-LAAO family effects on platelets are controversial, since it either induces aggregation or inhibits agonist-induced aggregation. These different effects are probably due to different experimental conditions. This Bothrops leucurus (Whitetail lancehead) protein is L-amino-acid oxidase.